A 742-amino-acid chain; its full sequence is MATKFPAFNQGLAQDPTTRRIWYGIATAHDFESHDGMTEEKLYQKLFSTHFGHLAIIALWVAGNLFHIAWQGNFEQFVLDPTHVRPIAHAIWDPHFGSGITEAMTQAGADGPVNIAYSGLYHWWYTIGMRTNEQLFQASIFMSILACWTLFAGWLHLQPKFRPSLAWFKNNESRLNHHLAVLFGFSSIAWTGHLVHVAIPESRGIHVGWDNWLTVLPHPAGLTPFFTLNWGAYAQNPDSLEQVFGTAEGAGTAIFTFLGGLHPQSEALWLTDIAHHHIAIGTVFIIAGHMYRNTFGIGHSLKEITEAHNTRHPLDPHKGSFGINHDGLYETVTNSLHFQLGLALAALGVATSLVAQHMGALPSYAFIARDYTTQSALYTHHQYIAMFLMVGAFAHGAIFFVRDYDPELNKDNVLARVLGTKEALISHLSWVTMILGFHTLGIYVHNDVVVAFGNPEKQILIEPVFAQFVQAAQGKMMYGFNALLSDPTSAASVAANSLPGNHYWMDLINRQDALSAFLPIGPADFLVHHAIALGLHTTALILIKGALDARGTKLIPDKKDLGYAFPCDGPGRGGTCDSSSWDAMYLAMFWALNLIAWVTFYWHWKHLAIWQGNVAQFNESGTYLMGWFRDYLWLNSAQLINGYNPFGVNSLSVWAWMFLFGHLVWATGFMFLISWRGYWQELIETLVWAHQRTPIANLVGWRDKPVALSIVQARLVGLAHFTIGNILTFGAFVIASTSGKFG.

8 helical membrane passes run 46-69, 135-158, 175-199, 273-291, 336-359, 375-401, 423-445, and 525-543; these read LFSTHFGHLAIIALWVAGNLFHIA, LFQASIFMSILACWTLFAGWLHLQ, LNHHLAVLFGFSSIAWTGHLVHVAI, IAHHHIAIGTVFIIAGHMY, LHFQLGLALAALGVATSLVAQHMG, SALYTHHQYIAMFLMVGAFAHGAIFFV, ALISHLSWVTMILGFHTLGIYVH, and FLVHHAIALGLHTTALILI. [4Fe-4S] cluster is bound by residues Cys567 and Cys576. 2 helical membrane passes run 583–604 and 651–673; these read AMYLAMFWALNLIAWVTFYWHW and LSVWAWMFLFGHLVWATGFMFLI. Divinyl chlorophyll a-binding residues include His662, Met670, and Tyr678. Trp679 is a binding site for phylloquinone. A helical transmembrane segment spans residues 715–735; the sequence is LVGLAHFTIGNILTFGAFVIA.

Belongs to the PsaA/PsaB family. In terms of assembly, the PsaA/B heterodimer binds the P700 divinyl chlorophyll special pair and subsequent electron acceptors. PSI consists of a core antenna complex that captures photons, and an electron transfer chain that converts photonic excitation into a charge separation. The cyanobacterial PSI reaction center is composed of one copy each of PsaA,B,C,D,E,F,I,J,K,L,M and X, and forms trimeric complexes. Requires PSI electron transfer chain: 5 divinyl chlorophyll a, 1 divinyl chlorophyll a', 2 phylloquinones and 3 4Fe-4S clusters. PSI core antenna: 90 divinyl chlorophyll a, 22 carotenoids, 3 phospholipids and 1 galactolipid. P700 is a divinyl chlorophyll a/divinyl chlorophyll a' dimer, A0 is one or more divinyl chlorophyll a, A1 is one or both phylloquinones and FX is a shared 4Fe-4S iron-sulfur center. as cofactor.

Its subcellular location is the cellular thylakoid membrane. It catalyses the reaction reduced [plastocyanin] + hnu + oxidized [2Fe-2S]-[ferredoxin] = oxidized [plastocyanin] + reduced [2Fe-2S]-[ferredoxin]. PsaA and PsaB bind P700, the primary electron donor of photosystem I (PSI), as well as the electron acceptors A0, A1 and FX. PSI is a plastocyanin/cytochrome c6-ferredoxin oxidoreductase, converting photonic excitation into a charge separation, which transfers an electron from the donor P700 chlorophyll pair to the spectroscopically characterized acceptors A0, A1, FX, FA and FB in turn. Oxidized P700 is reduced on the lumenal side of the thylakoid membrane by plastocyanin or cytochrome c6. The polypeptide is Photosystem I P700 chlorophyll a apoprotein A2 (Prochlorococcus marinus (strain MIT 9515)).